We begin with the raw amino-acid sequence, 420 residues long: CinA-like protein (420 aa).

This sequence belongs to the CinA family.

The chain is CinA-like protein from Geotalea uraniireducens (strain Rf4) (Geobacter uraniireducens).